We begin with the raw amino-acid sequence, 320 residues long: Dermonecrotic toxin LarSicTox-alphaIB2a (320 aa).

Residues 1–15 (MSHSSTALLHPYVAA) form the signal peptide. The propeptide occupies 16 to 41 (RATEKFAPIYFFCHPLQSAETDVAER). The active site involves His-52. Mg(2+)-binding residues include Glu-72 and Asp-74. His-88 functions as the Nucleophile in the catalytic mechanism. Disulfide bonds link Cys-92-Cys-98 and Cys-94-Cys-237. Asp-132 contributes to the Mg(2+) binding site. Asn-297 carries N-linked (GlcNAc...) asparagine glycosylation.

This sequence belongs to the arthropod phospholipase D family. Class II subfamily. The cofactor is Mg(2+). In terms of tissue distribution, expressed by the venom gland.

Its subcellular location is the secreted. It catalyses the reaction an N-(acyl)-sphingosylphosphocholine = an N-(acyl)-sphingosyl-1,3-cyclic phosphate + choline. The enzyme catalyses an N-(acyl)-sphingosylphosphoethanolamine = an N-(acyl)-sphingosyl-1,3-cyclic phosphate + ethanolamine. It carries out the reaction a 1-acyl-sn-glycero-3-phosphocholine = a 1-acyl-sn-glycero-2,3-cyclic phosphate + choline. The catalysed reaction is a 1-acyl-sn-glycero-3-phosphoethanolamine = a 1-acyl-sn-glycero-2,3-cyclic phosphate + ethanolamine. In terms of biological role, dermonecrotic toxins cleave the phosphodiester linkage between the phosphate and headgroup of certain phospholipids (sphingolipid and lysolipid substrates), forming an alcohol (often choline) and a cyclic phosphate. This toxin acts on sphingomyelin (SM). It may also act on ceramide phosphoethanolamine (CPE), lysophosphatidylcholine (LPC) and lysophosphatidylethanolamine (LPE), but not on lysophosphatidylserine (LPS), and lysophosphatidylglycerol (LPG). It acts by transphosphatidylation, releasing exclusively cyclic phosphate products as second products. Induces dermonecrosis, hemolysis, increased vascular permeability, edema, inflammatory response, and platelet aggregation. The polypeptide is Dermonecrotic toxin LarSicTox-alphaIB2a (Loxosceles arizonica (Arizona brown spider)).